The primary structure comprises 236 residues: Ribosome maturation protein SDO1 homolog (236 aa).

Belongs to the SDO1/SBDS family.

The chain is Ribosome maturation protein SDO1 homolog from Pyrococcus abyssi (strain GE5 / Orsay).